The sequence spans 480 residues: ATP synthase subunit beta, chloroplastic (480 aa).

161-168 (GGAGVGKT) is an ATP binding site.

The protein belongs to the ATPase alpha/beta chains family. F-type ATPases have 2 components, CF(1) - the catalytic core - and CF(0) - the membrane proton channel. CF(1) has five subunits: alpha(3), beta(3), gamma(1), delta(1), epsilon(1). CF(0) has four main subunits: a(1), b(1), b'(1) and c(9-12).

It localises to the plastid. Its subcellular location is the chloroplast thylakoid membrane. The enzyme catalyses ATP + H2O + 4 H(+)(in) = ADP + phosphate + 5 H(+)(out). Functionally, produces ATP from ADP in the presence of a proton gradient across the membrane. The catalytic sites are hosted primarily by the beta subunits. This Euglena gracilis protein is ATP synthase subunit beta, chloroplastic.